The following is a 1345-amino-acid chain: Aldehyde oxidase 2 (1345 aa).

Residues 9–96 (DDLEFFVNGR…GAAVTTVEGV (88 aa)) enclose the 2Fe-2S ferredoxin-type domain. Residues C48, C53, C56, and C78 each contribute to the [2Fe-2S] cluster site. Position 117 (Q117) interacts with Mo-molybdopterin. The [2Fe-2S] cluster site is built by C118, C121, C153, and C155. C155 contributes to the Mo-molybdopterin binding site. One can recognise an FAD-binding PCMH-type domain in the interval 238 to 423 (FYGERITWIA…GSVYIPHSQK (186 aa)). FAD is bound by residues 266–273 (LISGNTAL), A347, S356, H360, D369, and L413. Mo-molybdopterin is bound by residues 812-813 (GF), 1094-1097 (ASVG), Q1209, and L1274. The Proton acceptor; for azaheterocycle hydroxylase activity role is filled by E1276.

This sequence belongs to the xanthine dehydrogenase family. In terms of assembly, homodimer. [2Fe-2S] cluster serves as cofactor. FAD is required as a cofactor. Requires Mo-molybdopterin as cofactor. As to expression, expressed in olfactory mucosa epithelium (at protein level). Detected in skin.

The protein resides in the cytoplasm. It carries out the reaction an aldehyde + O2 + H2O = a carboxylate + H2O2 + H(+). Oxidase with broad substrate specificity, oxidizing aromatic azaheterocycles, such as phthalazine, as well as aldehydes, such as benzaldehyde and retinal. Cannot use hypoxanthine as substrate. In Mus musculus (Mouse), this protein is Aldehyde oxidase 2 (Aox2).